The following is a 224-amino-acid chain: UPF0173 metal-dependent hydrolase TK0141 (224 aa).

The protein belongs to the UPF0173 family.

The sequence is that of UPF0173 metal-dependent hydrolase TK0141 from Thermococcus kodakarensis (strain ATCC BAA-918 / JCM 12380 / KOD1) (Pyrococcus kodakaraensis (strain KOD1)).